Reading from the N-terminus, the 475-residue chain is Glucose-6-phosphate 1-dehydrogenase gcd1 (475 aa).

The NADP(+) site is built by R42 and K146. 3 residues coordinate D-glucose 6-phosphate: K146, E214, and D233. H238 functions as the Proton acceptor in the catalytic mechanism. K332 lines the D-glucose 6-phosphate pocket. 2 residues coordinate NADP(+): R342 and R365.

Belongs to the glucose-6-phosphate dehydrogenase family.

The protein localises to the cytoplasm. The enzyme catalyses D-glucose 6-phosphate + NADP(+) = 6-phospho-D-glucono-1,5-lactone + NADPH + H(+). It functions in the pathway carbohydrate degradation; pentose phosphate pathway; D-ribulose 5-phosphate from D-glucose 6-phosphate (oxidative stage): step 1/3. In terms of biological role, catalyzes the rate-limiting step of the oxidative pentose-phosphate pathway, which represents a route for the dissimilation of carbohydrates besides glycolysis. The main function of this enzyme is to provide reducing power (NADPH) and pentose phosphates for fatty acid and nucleic acid synthesis. In Schizosaccharomyces pombe (strain 972 / ATCC 24843) (Fission yeast), this protein is Glucose-6-phosphate 1-dehydrogenase gcd1.